A 997-amino-acid chain; its full sequence is Glutamate [NMDA] receptor subunit 1 (997 aa).

Residues 1-26 (MAMAEFVFCRPLFGLAIVLLVAPIDA) form the signal peptide. At 27-573 (AQRHTASDNP…TLVSFLQPFS (547 aa)) the chain is on the extracellular side. N-linked (GlcNAc...) asparagine glycans are attached at residues N258, N314, N345, N397, N454, N481, and N501. Glycine contacts are provided by residues 530–532 (PLT) and R537. A helical membrane pass occupies residues 574 to 594 (NTLWILVMVSVHVVALVLYLL). Topologically, residues 595 to 651 (DRFSPFGRFKLSHSDSNEEKALNLSSAVWFAWGVLLNSGIGEGTPRSFSARVLGMVW) are cytoplasmic. Residues 652-672 (AGFAMIIVASYTANLAAFLVL) traverse the membrane as a helical segment. Residues 673-831 (ERPKTKLSGI…KTPNTLGLKN (159 aa)) are Extracellular-facing. Residue N693 is glycosylated (N-linked (GlcNAc...) asparagine). The glycine site is built by S703 and D747. The helical transmembrane segment at 832 to 852 (MAGVFILVGVGIAGGVGLIII) threads the bilayer. Residues 853–997 (EVIYKKHQVK…YTSDVSHLVV (145 aa)) lie on the Cytoplasmic side of the membrane. Residues 970-997 (LGKTRPQQSVLPPRYSPGYTSDVSHLVV) form a disordered region. The span at 987-997 (GYTSDVSHLVV) shows a compositional bias: polar residues.

Belongs to the glutamate-gated ion channel (TC 1.A.10.1) family. In terms of assembly, forms a heteromeric NMDA channel with Nmdar2. As to expression, highly expressed in adult heads: in the brain and ring gland. Low expression throughout the entire brain is also seen. Higher expression levels were observed in some scattered cell bodies and part of their fibers, including those from several pairs of DPM (dorsal-posterior-medial) neurons surrounding the calyx, DAL (dorsal-anterior-lateral) and DPL (dorsal-posterior-lateral) neurons in the lateral protocerebrum (LP), VAL (ventral-anterior-lateral) neurons in the anterior protocerebrum, and two pairs of VP (ventral-posterior) neurons in the posterior protocerebrum. Many cell bodies in the optic lobes show preferential expression. Punctuate expression is notably detected in many brain regions including the superior medial protocerebrum. Weakly expressed in the antennal lobes and central complex.

It is found in the cell membrane. The protein resides in the postsynaptic cell membrane. The protein localises to the postsynaptic density. In terms of biological role, NMDA receptor subtype of glutamate-gated ion channels with high calcium permeability and voltage-dependent sensitivity to magnesium. Mediated by glycine. This protein plays a key role in synaptic plasticity, synaptogenesis, excitotoxicity, memory acquisition and learning. It mediates neuronal functions in glutamate neurotransmission. Is involved in the cell surface targeting of NMDA receptors. Plays a role in associative learning and in long-term memory consolidation. The sequence is that of Glutamate [NMDA] receptor subunit 1 from Drosophila melanogaster (Fruit fly).